Consider the following 400-residue polypeptide: Cysteine desulfurase (400 aa).

Residues 71–72, asparagine 150, glutamine 178, and 198–200 each bind pyridoxal 5'-phosphate; these read GT and SGH. Lysine 201 is modified (N6-(pyridoxal phosphate)lysine). Threonine 236 lines the pyridoxal 5'-phosphate pocket. Cysteine 324 (cysteine persulfide intermediate) is an active-site residue. Cysteine 324 provides a ligand contact to [2Fe-2S] cluster.

The protein belongs to the class-V pyridoxal-phosphate-dependent aminotransferase family. NifS/IscS subfamily. In terms of assembly, homodimer. Requires pyridoxal 5'-phosphate as cofactor.

It carries out the reaction (sulfur carrier)-H + L-cysteine = (sulfur carrier)-SH + L-alanine. Catalyzes the removal of elemental sulfur atoms from cysteine to produce alanine. Seems to participate in the biosynthesis of the nitrogenase metalloclusters by providing the inorganic sulfur required for the Fe-S core formation. This Nostoc sp. (strain PCC 7120 / SAG 25.82 / UTEX 2576) protein is Cysteine desulfurase.